A 382-amino-acid chain; its full sequence is ATP phosphoribosyltransferase regulatory subunit (382 aa).

This sequence belongs to the class-II aminoacyl-tRNA synthetase family. HisZ subfamily. Heteromultimer composed of HisG and HisZ subunits.

Its subcellular location is the cytoplasm. It participates in amino-acid biosynthesis; L-histidine biosynthesis; L-histidine from 5-phospho-alpha-D-ribose 1-diphosphate: step 1/9. Functionally, required for the first step of histidine biosynthesis. May allow the feedback regulation of ATP phosphoribosyltransferase activity by histidine. In Burkholderia pseudomallei (strain 1106a), this protein is ATP phosphoribosyltransferase regulatory subunit.